Here is a 469-residue protein sequence, read N- to C-terminus: Regulator of G-protein signaling 7 (469 aa).

The DEP domain maps to 37–112; it reads EKNGIPIRTV…DDGTFYRFQT (76 aa). Residues S229 and S241 each carry the phosphoserine modification. Positions 236–255 are disordered; that stretch reads DIRSHSPTHTPTPETKPPTE. Phosphothreonine is present on T243. Residues 255–316 enclose the G protein gamma domain; that stretch reads EDELHQQIKY…LSDDTTFWEL (62 aa). An RGS domain is found at 333–448; the sequence is GMDEALKDPV…IRSSAYQELL (116 aa). S434 is modified (phosphoserine).

Interacts with GNB5, forming the RGS7-GNB5 complex. Interacts with GPR158; promotes the GTPase activator activity of the RGS7-GNB5 complex in absence of glycine, in contrast GTPase activator activity of the RGS7-GNB5 complex is inhibited in presence of glycine. Interacts with GPR179. Interacts with PKD1; this prevents rapid proteasomal degradation. Interacts with RGS7BP, leading to regulate the subcellular location of the heterodimer formed with GNB5. Interacts (phosphorylated form) with 14-3-3 protein YWHAQ. Interacts with SNAPIN. Interacts with GNAI1. Interacts with GNAO1, GNAI3 and GNAZ. In terms of processing, palmitoylated. Ubiquitinated, leading to rapid proteasomal degradation. Post-translationally, phosphorylation and subsequent interaction with 14-3-3 proteins inhibits GAP activity. In terms of tissue distribution, detected in brain (at protein level).

It is found in the cytoplasm. It localises to the cytosol. The protein localises to the cell membrane. The protein resides in the membrane. GTPase activator component of the RGS7-GNB5 complex that regulates G protein-coupled receptor signaling cascades. The RGS7-GNB5 complex acts as an inhibitor signal transduction by promoting the GTPase activity of G protein alpha subunits, such as GNAO1, thereby driving them into their inactive GDP-bound form. May play a role in synaptic vesicle exocytosis. Glycine-dependent regulation of the RGS7-GNB5 complex by GPR158 affects mood and cognition via its ability to regulate neuronal excitability in L2/L3 pyramidal neurons of the prefrontal cortex. Modulates the activity of potassium channels that are activated by GNAO1 in response to muscarinic acetylcholine receptor M2/CHRM2 signaling. In Mus musculus (Mouse), this protein is Regulator of G-protein signaling 7 (Rgs7).